Consider the following 671-residue polypeptide: UvrABC system protein B (671 aa).

The 389-residue stretch at 35–423 (KAIIENKKHQ…NHQVVQQIIR (389 aa)) folds into the Helicase ATP-binding domain. 48 to 55 (GATGTGKT) contacts ATP. Residues 101 to 124 (NFDFFQPEAYIPSKDLYIDKDSRQ) carry the Beta-hairpin motif. The 163-residue stretch at 440–602 (QIDDIINEIH…IVPKTISKAI (163 aa)) folds into the Helicase C-terminal domain. The UVR domain maps to 632-667 (QQTIDNLRQEMLQAAKELDFERAAILRDTIIELENE).

It belongs to the UvrB family. In terms of assembly, forms a heterotetramer with UvrA during the search for lesions. Interacts with UvrC in an incision complex.

It localises to the cytoplasm. In terms of biological role, the UvrABC repair system catalyzes the recognition and processing of DNA lesions. A damage recognition complex composed of 2 UvrA and 2 UvrB subunits scans DNA for abnormalities. Upon binding of the UvrA(2)B(2) complex to a putative damaged site, the DNA wraps around one UvrB monomer. DNA wrap is dependent on ATP binding by UvrB and probably causes local melting of the DNA helix, facilitating insertion of UvrB beta-hairpin between the DNA strands. Then UvrB probes one DNA strand for the presence of a lesion. If a lesion is found the UvrA subunits dissociate and the UvrB-DNA preincision complex is formed. This complex is subsequently bound by UvrC and the second UvrB is released. If no lesion is found, the DNA wraps around the other UvrB subunit that will check the other stand for damage. This Mycoplasma mycoides subsp. mycoides SC (strain CCUG 32753 / NCTC 10114 / PG1) protein is UvrABC system protein B.